The primary structure comprises 834 residues: Glycerol-3-phosphate acyltransferase (834 aa).

The HXXXXD motif motif lies at 309–314 (CHRSHI).

This sequence belongs to the GPAT/DAPAT family.

The protein localises to the cell inner membrane. The catalysed reaction is sn-glycerol 3-phosphate + an acyl-CoA = a 1-acyl-sn-glycero-3-phosphate + CoA. The protein operates within phospholipid metabolism; CDP-diacylglycerol biosynthesis; CDP-diacylglycerol from sn-glycerol 3-phosphate: step 1/3. The protein is Glycerol-3-phosphate acyltransferase of Pseudomonas aeruginosa (strain UCBPP-PA14).